Reading from the N-terminus, the 301-residue chain is uncharacterized protein (301 aa).

The protein belongs to the asfivirus E301R family. In terms of assembly, interacts with host IRF3.

Its function is as follows. Plays a role in the inhibition of host innate immune system by acting as a negatively regulator of type I interferon production. Mechanistically, interacts with and prevents host IRF3 nuclear localization to inhibit its transcriptional activity. This is an uncharacterized protein from African swine fever virus (isolate Tick/South Africa/Pretoriuskop Pr4/1996) (ASFV).